We begin with the raw amino-acid sequence, 263 residues long: Probable WRKY transcription factor 62 (263 aa).

The interval 59-104 (DHQDDQSNNSSPQDSSPVLESSRKPLHKRGRKTSMAESSDYHRHES) is disordered. Low complexity predominate over residues 64–74 (QSNNSSPQDSS). The segment at residues 104-174 (SSTPIYHDGF…GQHICQLHQA (71 aa)) is a DNA-binding region (WRKY).

The protein belongs to the WRKY group III family.

It is found in the nucleus. Its function is as follows. Transcription factor. Interacts specifically with the W box (5'-(T)TGAC[CT]-3'), a frequently occurring elicitor-responsive cis-acting element. In Arabidopsis thaliana (Mouse-ear cress), this protein is Probable WRKY transcription factor 62 (WRKY62).